The primary structure comprises 398 residues: Acetate kinase (398 aa).

Asn9 is a Mg(2+) binding site. Position 16 (Lys16) interacts with ATP. Arg90 is a binding site for substrate. The Proton donor/acceptor role is filled by Asp147. ATP-binding positions include His207–Gly211, Asp282–Arg284, and Gly330–Asn334. Mg(2+) is bound at residue Glu384.

It belongs to the acetokinase family. In terms of assembly, homodimer. Mg(2+) serves as cofactor. The cofactor is Mn(2+).

Its subcellular location is the cytoplasm. The catalysed reaction is acetate + ATP = acetyl phosphate + ADP. It functions in the pathway metabolic intermediate biosynthesis; acetyl-CoA biosynthesis; acetyl-CoA from acetate: step 1/2. Its function is as follows. Catalyzes the formation of acetyl phosphate from acetate and ATP. Can also catalyze the reverse reaction. The protein is Acetate kinase of Staphylococcus carnosus (strain TM300).